Here is a 215-residue protein sequence, read N- to C-terminus: Small ribosomal subunit protein uS5 (215 aa).

The tract at residues methionine 1 to arginine 62 is disordered. Over residues asparagine 9 to glutamine 28 the composition is skewed to low complexity. Basic and acidic residues predominate over residues glutamate 29–glutamate 61. Positions tryptophan 59–valine 122 constitute an S5 DRBM domain.

It belongs to the universal ribosomal protein uS5 family. Part of the 30S ribosomal subunit. Contacts proteins S4 and S8.

In terms of biological role, with S4 and S12 plays an important role in translational accuracy. Located at the back of the 30S subunit body where it stabilizes the conformation of the head with respect to the body. This Parasynechococcus marenigrum (strain WH8102) protein is Small ribosomal subunit protein uS5.